The following is a 690-amino-acid chain: Glycine--tRNA ligase beta subunit (690 aa).

The protein belongs to the class-II aminoacyl-tRNA synthetase family. Tetramer of two alpha and two beta subunits.

The protein localises to the cytoplasm. It catalyses the reaction tRNA(Gly) + glycine + ATP = glycyl-tRNA(Gly) + AMP + diphosphate. The sequence is that of Glycine--tRNA ligase beta subunit from Syntrophus aciditrophicus (strain SB).